The chain runs to 184 residues: Elongation factor P (184 aa).

The protein belongs to the elongation factor P family.

The protein resides in the cytoplasm. The protein operates within protein biosynthesis; polypeptide chain elongation. Functionally, involved in peptide bond synthesis. Stimulates efficient translation and peptide-bond synthesis on native or reconstituted 70S ribosomes in vitro. Probably functions indirectly by altering the affinity of the ribosome for aminoacyl-tRNA, thus increasing their reactivity as acceptors for peptidyl transferase. This Albidiferax ferrireducens (strain ATCC BAA-621 / DSM 15236 / T118) (Rhodoferax ferrireducens) protein is Elongation factor P.